The chain runs to 410 residues: Lipoyl synthase, mitochondrial (410 aa).

Residues cysteine 125, cysteine 130, cysteine 136, cysteine 157, cysteine 161, cysteine 164, and serine 373 each contribute to the [4Fe-4S] cluster site. The region spanning 140–362 is the Radical SAM core domain; it reads SDEEGTATAT…EKEAMDMGFL (223 aa).

It belongs to the radical SAM superfamily. Lipoyl synthase family. Requires [4Fe-4S] cluster as cofactor.

It localises to the mitochondrion. It carries out the reaction [[Fe-S] cluster scaffold protein carrying a second [4Fe-4S](2+) cluster] + N(6)-octanoyl-L-lysyl-[protein] + 2 oxidized [2Fe-2S]-[ferredoxin] + 2 S-adenosyl-L-methionine + 4 H(+) = [[Fe-S] cluster scaffold protein] + N(6)-[(R)-dihydrolipoyl]-L-lysyl-[protein] + 4 Fe(3+) + 2 hydrogen sulfide + 2 5'-deoxyadenosine + 2 L-methionine + 2 reduced [2Fe-2S]-[ferredoxin]. The protein operates within protein modification; protein lipoylation via endogenous pathway; protein N(6)-(lipoyl)lysine from octanoyl-[acyl-carrier-protein]: step 2/2. Catalyzes the radical-mediated insertion of two sulfur atoms into the C-6 and C-8 positions of the octanoyl moiety bound to the lipoyl domains of lipoate-dependent enzymes, thereby converting the octanoylated domains into lipoylated derivatives. This is Lipoyl synthase, mitochondrial from Leishmania major.